Consider the following 347-residue polypeptide: Probable replication factor C subunit 3 (347 aa).

Belongs to the activator 1 small subunits family. Heteropentamer of various rfc subunits that forms a complex (RFC) with PCNA in the presence of ATP.

The protein localises to the nucleus. In terms of biological role, the elongation of primed DNA templates by DNA polymerase delta and epsilon requires the action of the accessory proteins PCNA and activator 1. This is Probable replication factor C subunit 3 (rfc3) from Dictyostelium discoideum (Social amoeba).